The sequence spans 176 residues: Translation initiation factor IF-3 (176 aa).

This sequence belongs to the IF-3 family. In terms of assembly, monomer.

The protein localises to the cytoplasm. In terms of biological role, IF-3 binds to the 30S ribosomal subunit and shifts the equilibrium between 70S ribosomes and their 50S and 30S subunits in favor of the free subunits, thus enhancing the availability of 30S subunits on which protein synthesis initiation begins. The chain is Translation initiation factor IF-3 from Nitratidesulfovibrio vulgaris (strain ATCC 29579 / DSM 644 / CCUG 34227 / NCIMB 8303 / VKM B-1760 / Hildenborough) (Desulfovibrio vulgaris).